Here is a 378-residue protein sequence, read N- to C-terminus: UPF0754 membrane protein SH1116 (378 aa).

Helical transmembrane passes span 4–24 (FLVI…TNVI) and 358–378 (SLGF…AIFV).

Belongs to the UPF0754 family.

It is found in the cell membrane. This is UPF0754 membrane protein SH1116 from Staphylococcus haemolyticus (strain JCSC1435).